We begin with the raw amino-acid sequence, 94 residues long: Integration host factor subunit beta (94 aa).

This sequence belongs to the bacterial histone-like protein family. In terms of assembly, heterodimer of an alpha and a beta chain.

This protein is one of the two subunits of integration host factor, a specific DNA-binding protein that functions in genetic recombination as well as in transcriptional and translational control. This Serratia proteamaculans (strain 568) protein is Integration host factor subunit beta.